The chain runs to 90 residues: UPF0237 protein BL1209.1 (90 aa).

The region spanning 5-79 (IITVVGQDTV…DDIGVRIRCQ (75 aa)) is the ACT domain.

It belongs to the UPF0237 family.

This chain is UPF0237 protein BL1209.1, found in Bifidobacterium longum (strain NCC 2705).